The chain runs to 485 residues: Cysteine--tRNA ligase (485 aa).

Cysteine 28 is a Zn(2+) binding site. A 'HIGH' region motif is present at residues 30–40; the sequence is MTVYDLCHVGH. Zn(2+) contacts are provided by cysteine 209, histidine 234, and glutamate 238. The 'KMSKS' region motif lies at 266-270; the sequence is KMSKS. An ATP-binding site is contributed by lysine 269.

Belongs to the class-I aminoacyl-tRNA synthetase family. In terms of assembly, monomer. Requires Zn(2+) as cofactor.

Its subcellular location is the cytoplasm. It carries out the reaction tRNA(Cys) + L-cysteine + ATP = L-cysteinyl-tRNA(Cys) + AMP + diphosphate. In Nitrosococcus oceani (strain ATCC 19707 / BCRC 17464 / JCM 30415 / NCIMB 11848 / C-107), this protein is Cysteine--tRNA ligase.